Here is a 302-residue protein sequence, read N- to C-terminus: Proteasome subunit beta (302 aa).

Residues 1 to 10 (MAGRVREVSH) show a composition bias toward basic and acidic residues. Residues 1-21 (MAGRVREVSHSSDQSGRLPAA) form a disordered region. Residues 1–67 (MAGRVREVSH…GPGAGEPPHA (67 aa)) constitute a propeptide, removed in mature form; by autocatalysis. Residue Thr68 is the Nucleophile of the active site. Positions 283–302 (RRGNPGGNPGISAVHGDGGN) are disordered.

It belongs to the peptidase T1B family. In terms of assembly, the 20S proteasome core is composed of 14 alpha and 14 beta subunits that assemble into four stacked heptameric rings, resulting in a barrel-shaped structure. The two inner rings, each composed of seven catalytic beta subunits, are sandwiched by two outer rings, each composed of seven alpha subunits. The catalytic chamber with the active sites is on the inside of the barrel. Has a gated structure, the ends of the cylinder being occluded by the N-termini of the alpha-subunits. Is capped by the proteasome-associated ATPase, ARC.

Its subcellular location is the cytoplasm. It carries out the reaction Cleavage of peptide bonds with very broad specificity.. It participates in protein degradation; proteasomal Pup-dependent pathway. Its activity is regulated as follows. The formation of the proteasomal ATPase ARC-20S proteasome complex, likely via the docking of the C-termini of ARC into the intersubunit pockets in the alpha-rings, may trigger opening of the gate for substrate entry. Interconversion between the open-gate and close-gate conformations leads to a dynamic regulation of the 20S proteasome proteolysis activity. Its function is as follows. Component of the proteasome core, a large protease complex with broad specificity involved in protein degradation. The chain is Proteasome subunit beta from Kineococcus radiotolerans (strain ATCC BAA-149 / DSM 14245 / SRS30216).